The following is a 1282-amino-acid chain: Clustered mitochondria protein homolog (1282 aa).

The tract at residues 1-43 (MEQNNGTTEHPKEVLDQTNPSNEVTGVPNGNHAEGEGDQNAGE) is disordered. In terms of domain architecture, Clu spans 341-585 (DITRPQENYL…RITPLDVLWY (245 aa)). Basic and acidic residues-rich tracts occupy residues 631 to 641 (EAEEKAEESKP) and 653 to 669 (ESEKKETTSPDQERVDI). 2 disordered regions span residues 631–669 (EAEEKAEESKPNGEAADASENAESEKKETTSPDQERVDI) and 892–936 (RSQL…PAPA). Residues 924–936 (QASPRPAQSPAPA) are compositionally biased toward low complexity. Residues 1003 to 1036 (AKLYHQLSMLYYQSDDKDAAVELARKAVIVTERT) form a TPR repeat. The disordered stretch occupies residues 1202–1282 (ANLPTRLGTK…SKQSTVKPSS (81 aa)). A compositionally biased stretch (polar residues) spans 1212–1223 (PQPQVGQTTSEM). A compositionally biased stretch (basic residues) spans 1257-1272 (TKQKKRAAARNPKLRG). Over residues 1273 to 1282 (SKQSTVKPSS) the composition is skewed to polar residues.

It belongs to the CLU family. As to quaternary structure, may associate with the eukaryotic translation initiation factor 3 (eIF-3) complex.

It is found in the cytoplasm. Functionally, mRNA-binding protein involved in proper cytoplasmic distribution of mitochondria. In Coccidioides immitis (strain RS) (Valley fever fungus), this protein is Clustered mitochondria protein homolog.